An 86-amino-acid polypeptide reads, in one-letter code: Cell division topological specificity factor (86 aa).

The protein belongs to the MinE family.

Its function is as follows. Prevents the cell division inhibition by proteins MinC and MinD at internal division sites while permitting inhibition at polar sites. This ensures cell division at the proper site by restricting the formation of a division septum at the midpoint of the long axis of the cell. This chain is Cell division topological specificity factor, found in Shewanella pealeana (strain ATCC 700345 / ANG-SQ1).